The chain runs to 256 residues: Protein FixA (256 aa).

This sequence belongs to the ETF beta-subunit/FixA family. As to quaternary structure, heterodimer of FixA and FixB.

The protein operates within amine and polyamine metabolism; carnitine metabolism. Its function is as follows. Required for anaerobic carnitine reduction. May bring reductant to CaiA. This is Protein FixA from Escherichia coli O17:K52:H18 (strain UMN026 / ExPEC).